Here is a 437-residue protein sequence, read N- to C-terminus: Serine--tRNA ligase (437 aa).

244–246 (TAE) lines the L-serine pocket. 275–277 (RSE) provides a ligand contact to ATP. Glu-298 provides a ligand contact to L-serine. 362 to 365 (EISS) provides a ligand contact to ATP. Residue Ser-397 participates in L-serine binding.

It belongs to the class-II aminoacyl-tRNA synthetase family. Type-1 seryl-tRNA synthetase subfamily. As to quaternary structure, homodimer. The tRNA molecule binds across the dimer.

It localises to the cytoplasm. The catalysed reaction is tRNA(Ser) + L-serine + ATP = L-seryl-tRNA(Ser) + AMP + diphosphate + H(+). The enzyme catalyses tRNA(Sec) + L-serine + ATP = L-seryl-tRNA(Sec) + AMP + diphosphate + H(+). The protein operates within aminoacyl-tRNA biosynthesis; selenocysteinyl-tRNA(Sec) biosynthesis; L-seryl-tRNA(Sec) from L-serine and tRNA(Sec): step 1/1. In terms of biological role, catalyzes the attachment of serine to tRNA(Ser). Is also able to aminoacylate tRNA(Sec) with serine, to form the misacylated tRNA L-seryl-tRNA(Sec), which will be further converted into selenocysteinyl-tRNA(Sec). The polypeptide is Serine--tRNA ligase (Nitrosomonas eutropha (strain DSM 101675 / C91 / Nm57)).